A 467-amino-acid polypeptide reads, in one-letter code: Light-independent protochlorophyllide reductase subunit N (467 aa).

Cys-23, Cys-48, and Cys-108 together coordinate [4Fe-4S] cluster.

The protein belongs to the BchN/ChlN family. In terms of assembly, protochlorophyllide reductase is composed of three subunits; ChlL, ChlN and ChlB. Forms a heterotetramer of two ChlB and two ChlN subunits. [4Fe-4S] cluster serves as cofactor.

The catalysed reaction is chlorophyllide a + oxidized 2[4Fe-4S]-[ferredoxin] + 2 ADP + 2 phosphate = protochlorophyllide a + reduced 2[4Fe-4S]-[ferredoxin] + 2 ATP + 2 H2O. It participates in porphyrin-containing compound metabolism; chlorophyll biosynthesis (light-independent). Component of the dark-operative protochlorophyllide reductase (DPOR) that uses Mg-ATP and reduced ferredoxin to reduce ring D of protochlorophyllide (Pchlide) to form chlorophyllide a (Chlide). This reaction is light-independent. The NB-protein (ChlN-ChlB) is the catalytic component of the complex. The sequence is that of Light-independent protochlorophyllide reductase subunit N from Nostoc sp. (strain PCC 7120 / SAG 25.82 / UTEX 2576).